Reading from the N-terminus, the 27-residue chain is DELTA-pseudomyrmecitoxin-Pp1a subunit A (27 aa).

Heterodimer composed of subunit A and subunit B (DELTA-PSDTX-Pp1a); disulfide-linked. In terms of tissue distribution, expressed by the venom gland.

Its subcellular location is the secreted. This heterodimer has insecticidal and cytotoxic properties. Induces immediate paralysis when injected into blowflies (Lucilia cuprina), and then death within 24 hours. Also inhibits the growth of Aedes albopictus mosquito C6/36 cells. In Pseudomyrmex penetrator (Ant), this protein is DELTA-pseudomyrmecitoxin-Pp1a subunit A.